The sequence spans 295 residues: UDP-N-acetylenolpyruvoylglucosamine reductase (295 aa).

The region spanning 23–188 (KVGGPADFLA…ISAKFALKPG (166 aa)) is the FAD-binding PCMH-type domain. The active site involves Arg-167. Ser-217 acts as the Proton donor in catalysis. Glu-287 is an active-site residue.

Belongs to the MurB family. Requires FAD as cofactor.

The protein localises to the cytoplasm. The enzyme catalyses UDP-N-acetyl-alpha-D-muramate + NADP(+) = UDP-N-acetyl-3-O-(1-carboxyvinyl)-alpha-D-glucosamine + NADPH + H(+). Its pathway is cell wall biogenesis; peptidoglycan biosynthesis. In terms of biological role, cell wall formation. In Streptococcus pyogenes serotype M1, this protein is UDP-N-acetylenolpyruvoylglucosamine reductase.